A 272-amino-acid polypeptide reads, in one-letter code: Rhomboid-type serine protease B (272 aa).

The next 5 membrane-spanning stretches (helical) occupy residues 30–50 (IVLLVILAFWLLELQTIWSVV), 72–92 (PFIHVGFFHAFVNLLALTPLL), 103–123 (TAVALFIGPLSTFPAGIYILV), 133–153 (AVVGASVWIFLLLGSEAIKTF), and 164–184 (TKIPTWTSPLFACALVSIFVP). Catalysis depends on Ser138, which acts as the Nucleophile. The N-linked (GlcNAc...) asparagine glycan is linked to Asn185. The helical transmembrane segment at 186–206 (TSFLGHLSAIIIGYLLGLGYL) threads the bilayer. His191 is a catalytic residue.

Belongs to the peptidase S54 family.

It localises to the membrane. It catalyses the reaction Cleaves type-1 transmembrane domains using a catalytic dyad composed of serine and histidine that are contributed by different transmembrane domains.. In terms of biological role, rhomboid protease that catalyzes intramembrane proteolysis. Required for transcription factor srbA activation by mediating its release from the membrane and thereby regulating its activity under hypoxic conditions. Essential for iron homeostasis and resistance to azoles such as voriconazole. Required for virulence in murine models of invasive pulmonary aspergillosis (IPA). The protein is Rhomboid-type serine protease B of Aspergillus fumigatus (strain CBS 144.89 / FGSC A1163 / CEA10) (Neosartorya fumigata).